The primary structure comprises 365 residues: Histidinol-phosphate aminotransferase 2 (365 aa).

N6-(pyridoxal phosphate)lysine is present on Lys-221.

It belongs to the class-II pyridoxal-phosphate-dependent aminotransferase family. Histidinol-phosphate aminotransferase subfamily. Homodimer. It depends on pyridoxal 5'-phosphate as a cofactor.

It carries out the reaction L-histidinol phosphate + 2-oxoglutarate = 3-(imidazol-4-yl)-2-oxopropyl phosphate + L-glutamate. The protein operates within amino-acid biosynthesis; L-histidine biosynthesis; L-histidine from 5-phospho-alpha-D-ribose 1-diphosphate: step 7/9. The polypeptide is Histidinol-phosphate aminotransferase 2 (hisC2) (Bradyrhizobium diazoefficiens (strain JCM 10833 / BCRC 13528 / IAM 13628 / NBRC 14792 / USDA 110)).